Consider the following 487-residue polypeptide: Probable peptidoglycan glycosyltransferase FtsW (487 aa).

A run of 9 helical transmembrane segments spans residues 30-50 (VSLI…VTSA), 71-91 (IYIV…MQWW), 93-113 (TSNA…LLVG), 122-142 (WLAI…FFFC), 167-187 (VVFF…TVVV), 203-223 (LWQF…LIMF), 282-302 (FIMA…VLAL), 332-352 (IGIW…GILP), and 358-378 (FPLL…VGLL). Disordered stretches follow at residues 398 to 419 (KAKA…SAGK) and 444 to 487 (IDSI…DGYV). Over residues 401–416 (ASTSSSRKNKPKTASS) the composition is skewed to polar residues. The segment covering 444-453 (IDSIMDDFAQ) has biased composition (acidic residues).

Belongs to the SEDS family. FtsW subfamily.

Its subcellular location is the cell inner membrane. The enzyme catalyses [GlcNAc-(1-&gt;4)-Mur2Ac(oyl-L-Ala-gamma-D-Glu-L-Lys-D-Ala-D-Ala)](n)-di-trans,octa-cis-undecaprenyl diphosphate + beta-D-GlcNAc-(1-&gt;4)-Mur2Ac(oyl-L-Ala-gamma-D-Glu-L-Lys-D-Ala-D-Ala)-di-trans,octa-cis-undecaprenyl diphosphate = [GlcNAc-(1-&gt;4)-Mur2Ac(oyl-L-Ala-gamma-D-Glu-L-Lys-D-Ala-D-Ala)](n+1)-di-trans,octa-cis-undecaprenyl diphosphate + di-trans,octa-cis-undecaprenyl diphosphate + H(+). Its pathway is cell wall biogenesis; peptidoglycan biosynthesis. In terms of biological role, peptidoglycan polymerase that is essential for cell division. The protein is Probable peptidoglycan glycosyltransferase FtsW of Pseudoalteromonas atlantica (strain T6c / ATCC BAA-1087).